We begin with the raw amino-acid sequence, 181 residues long: Adenine phosphoribosyltransferase (181 aa).

The protein belongs to the purine/pyrimidine phosphoribosyltransferase family. As to quaternary structure, homodimer.

It localises to the cytoplasm. The catalysed reaction is AMP + diphosphate = 5-phospho-alpha-D-ribose 1-diphosphate + adenine. It functions in the pathway purine metabolism; AMP biosynthesis via salvage pathway; AMP from adenine: step 1/1. Catalyzes a salvage reaction resulting in the formation of AMP, that is energically less costly than de novo synthesis. The sequence is that of Adenine phosphoribosyltransferase from Methylobacterium nodulans (strain LMG 21967 / CNCM I-2342 / ORS 2060).